Consider the following 503-residue polypeptide: MGKLYIFDTTLRDGEQTPGVNLNKEEKLEIAKQLAKLNVDIIEAGFPIASPGEFEAVKNIAEKVKGPIIAALARAIPMDIDRAWEAIKYSESPRIHTFIATSDIHIEKKLKKTRDEVLEQAVSAVKYAKRYCSDVEFSAEDAVRSDFNFLVKIFEAVIEAGATVINVPDTVGYALPWEFGELIRRLKENIRNIDKARVSVHCHNDLGLATANSLSAIVNGAEQVECTVNGLGERAGNAAMEEIVMAIKVRRLPFEVSIKTEEIYKTSKLVSNLTGIPIQPNKAIVGENAFAHESGIHQHGVIQDPSTYEIIDPKTIGIPESKIVLGKHSGKHAFEKRLQELGYSLPPDQLEEAFRRFKELADKKKEITDKDIEALVSNQIRIIPEYYKLRHLQVVSGIGIVPTATIIISENGEEIKTVEIGNGPVDAVYKAITKAVKVPHSLEDFSLKSVTGGTDALGEAMVKLSDKDGNIYVGRATSTDVIEASALAYLRALNQLVMLKGKD.

In terms of domain architecture, Pyruvate carboxyltransferase spans 4 to 264; it reads LYIFDTTLRD…EVSIKTEEIY (261 aa). Mn(2+) is bound by residues Asp13, His201, His203, and Asn237. Residues 388 to 503 are regulatory domain; sequence KLRHLQVVSG…NQLVMLKGKD (116 aa).

This sequence belongs to the alpha-IPM synthase/homocitrate synthase family. LeuA type 1 subfamily. Homodimer. Mn(2+) serves as cofactor.

Its subcellular location is the cytoplasm. The catalysed reaction is 3-methyl-2-oxobutanoate + acetyl-CoA + H2O = (2S)-2-isopropylmalate + CoA + H(+). The protein operates within amino-acid biosynthesis; L-leucine biosynthesis; L-leucine from 3-methyl-2-oxobutanoate: step 1/4. In terms of biological role, catalyzes the condensation of the acetyl group of acetyl-CoA with 3-methyl-2-oxobutanoate (2-ketoisovalerate) to form 3-carboxy-3-hydroxy-4-methylpentanoate (2-isopropylmalate). This Dictyoglomus turgidum (strain DSM 6724 / Z-1310) protein is 2-isopropylmalate synthase.